The sequence spans 365 residues: Elongation factor Tu (365 aa).

Residues 1–7 (HVDHGKT), 62–66 (DCPGH), and 117–120 (NKCD) each bind GTP. The region spanning 1–185 (HVDHGKTTLT…TLDSYIPTPE (185 aa)) is the tr-type G domain. Threonine 7 serves as a coordination point for Mg(2+).

Belongs to the TRAFAC class translation factor GTPase superfamily. Classic translation factor GTPase family. EF-Tu/EF-1A subfamily. As to quaternary structure, monomer.

It localises to the cytoplasm. It catalyses the reaction GTP + H2O = GDP + phosphate + H(+). Functionally, GTP hydrolase that promotes the GTP-dependent binding of aminoacyl-tRNA to the A-site of ribosomes during protein biosynthesis. The sequence is that of Elongation factor Tu from Buchnera aphidicola subsp. Schlechtendalia chinensis.